Here is a 220-residue protein sequence, read N- to C-terminus: Uracil-DNA glycosylase (220 aa).

The active-site Proton acceptor is the Asp61.

The protein belongs to the uracil-DNA glycosylase (UDG) superfamily. UNG family.

It localises to the cytoplasm. The catalysed reaction is Hydrolyzes single-stranded DNA or mismatched double-stranded DNA and polynucleotides, releasing free uracil.. Its function is as follows. Excises uracil residues from the DNA which can arise as a result of misincorporation of dUMP residues by DNA polymerase or due to deamination of cytosine. The protein is Uracil-DNA glycosylase of Glaesserella parasuis serovar 5 (strain SH0165) (Haemophilus parasuis).